A 321-amino-acid polypeptide reads, in one-letter code: PI-PLC X domain-containing protein 3 (321 aa).

A PI-PLC X-box domain is found at 22 to 197 (SMHSIPLTNL…DYQVLVFYHS (176 aa)). Catalysis depends on residues histidine 37 and histidine 114.

As to expression, expressed at highest levels in heart. Also detected in kidney, lung, small intestine and colon. Expressed at very low levels, if any, in leukocytes, thymus and skeletal muscle.

Its subcellular location is the cytoplasm. The sequence is that of PI-PLC X domain-containing protein 3 (PLCXD3) from Homo sapiens (Human).